We begin with the raw amino-acid sequence, 517 residues long: Cytochrome P450 1A1 (517 aa).

Positions 34-45 (WQPRVPKGLKSP) are mitochondrial targeting signal. Serine 72 carries O-linked (GlcNAc) serine glycosylation. Phenylalanine 229 contributes to the substrate binding site. Cysteine 462 lines the heme pocket.

Belongs to the cytochrome P450 family. As to quaternary structure, interacts with cytosolic chaperones HSP70 and HSP90; this interaction is required for initial targeting to mitochondria. Interacts (via mitochondrial targeting signal) with TOMM40 (via N-terminus); this interaction is required for translocation across the mitochondrial outer membrane. Heme serves as cofactor.

The protein resides in the endoplasmic reticulum membrane. The protein localises to the mitochondrion inner membrane. Its subcellular location is the microsome membrane. It is found in the cytoplasm. It catalyses the reaction an organic molecule + reduced [NADPH--hemoprotein reductase] + O2 = an alcohol + oxidized [NADPH--hemoprotein reductase] + H2O + H(+). It carries out the reaction estrone + reduced [NADPH--hemoprotein reductase] + O2 = 2-hydroxyestrone + oxidized [NADPH--hemoprotein reductase] + H2O + H(+). The enzyme catalyses estrone + reduced [NADPH--hemoprotein reductase] + O2 = 4-hydroxyestrone + oxidized [NADPH--hemoprotein reductase] + H2O + H(+). The catalysed reaction is estrone + reduced [NADPH--hemoprotein reductase] + O2 = 6alpha-hydroxyestrone + oxidized [NADPH--hemoprotein reductase] + H2O + H(+). It catalyses the reaction estrone + reduced [NADPH--hemoprotein reductase] + O2 = 15alpha-hydroxyestrone + oxidized [NADPH--hemoprotein reductase] + H2O + H(+). It carries out the reaction estrone + reduced [NADPH--hemoprotein reductase] + O2 = 16alpha-hydroxyestrone + oxidized [NADPH--hemoprotein reductase] + H2O + H(+). The enzyme catalyses 17beta-estradiol + reduced [NADPH--hemoprotein reductase] + O2 = 2-hydroxy-17beta-estradiol + oxidized [NADPH--hemoprotein reductase] + H2O + H(+). The catalysed reaction is 17beta-estradiol + reduced [NADPH--hemoprotein reductase] + O2 = 4-hydroxy-17beta-estradiol + oxidized [NADPH--hemoprotein reductase] + H2O + H(+). It catalyses the reaction 17beta-estradiol + reduced [NADPH--hemoprotein reductase] + O2 = 6alpha-hydroxy-17beta-estradiol + oxidized [NADPH--hemoprotein reductase] + H2O + H(+). It carries out the reaction 17beta-estradiol + reduced [NADPH--hemoprotein reductase] + O2 = 7alpha-hydroxy-17beta-estradiol + oxidized [NADPH--hemoprotein reductase] + H2O + H(+). The enzyme catalyses 17beta-estradiol + reduced [NADPH--hemoprotein reductase] + O2 = 15alpha-hydroxy-17beta-estradiol + oxidized [NADPH--hemoprotein reductase] + H2O + H(+). The catalysed reaction is (5Z,8Z,11Z)-eicosatrienoate + reduced [NADPH--hemoprotein reductase] + O2 = 19-hydroxy-(5Z,8Z,11Z)-eicosatrienoate + oxidized [NADPH--hemoprotein reductase] + H2O + H(+). It catalyses the reaction (5Z,8Z,11Z,14Z)-eicosatetraenoate + reduced [NADPH--hemoprotein reductase] + O2 = 16-hydroxy-(5Z,8Z,11Z,14Z)-eicosatetraenoate + oxidized [NADPH--hemoprotein reductase] + H2O + H(+). It carries out the reaction (5Z,8Z,11Z,14Z)-eicosatetraenoate + reduced [NADPH--hemoprotein reductase] + O2 = 17-hydroxy-(5Z,8Z,11Z,14Z)-eicosatetraenoate + oxidized [NADPH--hemoprotein reductase] + H2O + H(+). The enzyme catalyses (5Z,8Z,11Z,14Z)-eicosatetraenoate + reduced [NADPH--hemoprotein reductase] + O2 = 18-hydroxy-(5Z,8Z,11Z,14Z)-eicosatetraenoate + oxidized [NADPH--hemoprotein reductase] + H2O + H(+). The catalysed reaction is (5Z,8Z,11Z,14Z)-eicosatetraenoate + reduced [NADPH--hemoprotein reductase] + O2 = 19-hydroxy-(5Z,8Z,11Z,14Z)-eicosatetraenoate + oxidized [NADPH--hemoprotein reductase] + H2O + H(+). It catalyses the reaction (5Z,8Z,11Z,14Z,17Z)-eicosapentaenoate + reduced [NADPH--hemoprotein reductase] + O2 = 19-hydroxy-(5Z,8Z,11Z,14Z,17Z)-eicosapentaenoate + oxidized [NADPH--hemoprotein reductase] + H2O + H(+). It carries out the reaction (5Z,8Z,11Z,14Z)-eicosatetraenoate + reduced [NADPH--hemoprotein reductase] + O2 = (8R,9S)-epoxy-(5Z,11Z,14Z)-eicosatrienoate + oxidized [NADPH--hemoprotein reductase] + H2O + H(+). The enzyme catalyses (5Z,8Z,11Z,14Z)-eicosatetraenoate + reduced [NADPH--hemoprotein reductase] + O2 = (11R,12S)-epoxy-(5Z,8Z,14Z)-eicosatrienoate + oxidized [NADPH--hemoprotein reductase] + H2O + H(+). The catalysed reaction is (5Z,8Z,11Z,14Z)-eicosatetraenoate + reduced [NADPH--hemoprotein reductase] + O2 = (14S,15R)-epoxy-(5Z,8Z,11Z)-eicosatrienoate + oxidized [NADPH--hemoprotein reductase] + H2O + H(+). It catalyses the reaction (5Z,8Z,11Z,14Z)-eicosatetraenoate + reduced [NADPH--hemoprotein reductase] + O2 = (14R,15S)-epoxy-(5Z,8Z,11Z)-eicosatrienoate + oxidized [NADPH--hemoprotein reductase] + H2O + H(+). It carries out the reaction (5Z,8Z,11Z,14Z,17Z)-eicosapentaenoate + reduced [NADPH--hemoprotein reductase] + O2 = (17R,18S)-epoxy-(5Z,8Z,11Z,14Z)-eicosatetraenoate + oxidized [NADPH--hemoprotein reductase] + H2O + H(+). The enzyme catalyses (4Z,7Z,10Z,13Z,16Z,19Z)-docosahexaenoate + reduced [NADPH--hemoprotein reductase] + O2 = (19S,20R)-epoxy-(4Z,7Z,10Z,13Z,16Z)-docosapentaenoate + oxidized [NADPH--hemoprotein reductase] + H2O + H(+). The catalysed reaction is (4Z,7Z,10Z,13Z,16Z,19Z)-docosahexaenoate + reduced [NADPH--hemoprotein reductase] + O2 = (19R,20S)-epoxy-(4Z,7Z,10Z,13Z,16Z)-docosapentaenoate + oxidized [NADPH--hemoprotein reductase] + H2O + H(+). It catalyses the reaction all-trans-retinol + reduced [NADPH--hemoprotein reductase] + O2 = all-trans-retinal + oxidized [NADPH--hemoprotein reductase] + 2 H2O + H(+). It carries out the reaction all-trans-retinal + reduced [NADPH--hemoprotein reductase] + O2 = all-trans-retinoate + oxidized [NADPH--hemoprotein reductase] + H2O + 2 H(+). The enzyme catalyses (13S)-hydroperoxy-(9Z,11E)-octadecadienoate = 13-oxo-(9Z,11E)-octadecadienoate + H2O. The catalysed reaction is (12S)-hydroperoxy-(5Z,8Z,10E,14Z)-eicosatetraenoate = 12-oxo-(5Z,8Z,10E,14Z)-eicosatetraenoate + H2O. It catalyses the reaction (15S)-hydroperoxy-(5Z,8Z,11Z,13E)-eicosatetraenoate = 15-oxo-(5Z,8Z,11Z,13E)-eicosatetraenoate + H2O. It carries out the reaction (5S)-hydroperoxy-(6E,8Z,11Z,14Z)-eicosatetraenoate = 5-oxo-(6E,8Z,11Z,14Z)-eicosatetraenoate + H2O. It participates in steroid hormone biosynthesis. Its pathway is lipid metabolism; fatty acid metabolism. The protein operates within cofactor metabolism; retinol metabolism. A cytochrome P450 monooxygenase involved in the metabolism of various endogenous substrates, including fatty acids, steroid hormones and vitamins. Mechanistically, uses molecular oxygen inserting one oxygen atom into a substrate, and reducing the second into a water molecule, with two electrons provided by NADPH via cytochrome P450 reductase (CPR; NADPH-ferrihemoprotein reductase). Catalyzes the hydroxylation of carbon-hydrogen bonds. Exhibits high catalytic activity for the formation of hydroxyestrogens from estrone (E1) and 17beta-estradiol (E2), namely 2-hydroxy E1 and E2, as well as D-ring hydroxylated E1 and E2 at the C15alpha and C16alpha positions. Displays different regioselectivities for polyunsaturated fatty acids (PUFA) hydroxylation. Catalyzes the epoxidation of double bonds of certain PUFA. Converts arachidonic acid toward epoxyeicosatrienoic acid (EET) regioisomers, 8,9-, 11,12-, and 14,15-EET, that function as lipid mediators in the vascular system. Displays an absolute stereoselectivity in the epoxidation of eicosapentaenoic acid (EPA) producing the 17(R),18(S) enantiomer. May play an important role in all-trans retinoic acid biosynthesis in extrahepatic tissues. Catalyzes two successive oxidative transformation of all-trans retinol to all-trans retinal and then to the active form all-trans retinoic acid. May also participate in eicosanoids metabolism by converting hydroperoxide species into oxo metabolites (lipoxygenase-like reaction, NADPH-independent). The sequence is that of Cytochrome P450 1A1 (CYP1A1) from Felis catus (Cat).